Consider the following 890-residue polypeptide: UPF0182 protein Ppro_2689 (890 aa).

7 helical membrane-spanning segments follow: residues phenylalanine 6–phenylalanine 26, alanine 50–leucine 70, leucine 102–tryptophan 122, threonine 157–tyrosine 177, leucine 200–phenylalanine 220, threonine 244–tryptophan 264, and glycine 266–isoleucine 286.

This sequence belongs to the UPF0182 family.

The protein resides in the cell membrane. The chain is UPF0182 protein Ppro_2689 from Pelobacter propionicus (strain DSM 2379 / NBRC 103807 / OttBd1).